A 333-amino-acid chain; its full sequence is NADH-quinone oxidoreductase subunit H (333 aa).

A run of 8 helical transmembrane segments spans residues 17-37 (VIQAIVILLVVVLVAALMSFI), 91-111 (VAMATAVLSFIVIPVSPTLGV), 116-136 (IGLLFFMAMAGIAVYAVLFGG), 156-176 (ISYEVFLGISLMGVVAIAGSF), 188-208 (MWFIVPQFLGFMIFVVAGVAV), 244-264 (YVNIVLISALIVTLFFGGWLA), 272-292 (FIPPVFWFIVKTAFFVMMFVL), and 310-330 (WKVCLPLALVNLMVTGAVILM).

This sequence belongs to the complex I subunit 1 family. In terms of assembly, NDH-1 is composed of 14 different subunits. Subunits NuoA, H, J, K, L, M, N constitute the membrane sector of the complex.

Its subcellular location is the cell inner membrane. The catalysed reaction is a quinone + NADH + 5 H(+)(in) = a quinol + NAD(+) + 4 H(+)(out). In terms of biological role, NDH-1 shuttles electrons from NADH, via FMN and iron-sulfur (Fe-S) centers, to quinones in the respiratory chain. The immediate electron acceptor for the enzyme in this species is believed to be ubiquinone. Couples the redox reaction to proton translocation (for every two electrons transferred, four hydrogen ions are translocated across the cytoplasmic membrane), and thus conserves the redox energy in a proton gradient. This subunit may bind ubiquinone. In Acinetobacter baylyi (strain ATCC 33305 / BD413 / ADP1), this protein is NADH-quinone oxidoreductase subunit H.